The following is a 494-amino-acid chain: MSAAAANTPSSSATILPFAEHSKVARDTRPLRLITCGSVDDGKSTLIGRLLWDTKAVKEDQAATLHRDSGKQNDLGLPDFALLLDGLQAEREQGITIDVAYRYFATDRRAFIVADTPGHEQYTRNMATGASTADLAVLLVDARTGILEQTRRHATIAALMGIRQFVLAVNKIDLTNYDKAGFELIAHEFRDFASDLGIKQITAIPMSALKGENVVLSGKASMPWYEGPTLVETLELATVRSTQSGGFRLPVQRVSRPGESFRGYQGTVAGGSVKPGDSVVVLPSGMVANVKQIVTFDLVRNAAVAGDAVTLVLDRQVDVSRGDMIVSIEAQPLTGLAFDAQIVALQPGGIEAGKRYWLKSASRRQRVSVQPVSQLNLREGEWQAHETSLPMNAIGKVRLSFDETAIFDPYEQNRATGSFILIDPDTNNTVAGGMISAKRSTGATEEQGDRVILSLPAGLAEKLLAGELLAKHRDEIDIRRTDAATASRLIGDLD.

One can recognise a tr-type G domain in the interval 28-242 (TRPLRLITCG…TLELATVRST (215 aa)). Positions 37–44 (GSVDDGKS) are G1. 37-44 (GSVDDGKS) lines the GTP pocket. Residues 94 to 98 (GITID) are G2. The interval 115-118 (DTPG) is G3. GTP contacts are provided by residues 115 to 119 (DTPGH) and 170 to 173 (NKID). Positions 170-173 (NKID) are G4. Residues 207–209 (SAL) are G5.

This sequence belongs to the TRAFAC class translation factor GTPase superfamily. Classic translation factor GTPase family. CysN/NodQ subfamily. Heterodimer composed of CysD, the smaller subunit, and CysN.

The catalysed reaction is sulfate + ATP + H(+) = adenosine 5'-phosphosulfate + diphosphate. It functions in the pathway sulfur metabolism; hydrogen sulfide biosynthesis; sulfite from sulfate: step 1/3. Its function is as follows. With CysD forms the ATP sulfurylase (ATPS) that catalyzes the adenylation of sulfate producing adenosine 5'-phosphosulfate (APS) and diphosphate, the first enzymatic step in sulfur assimilation pathway. APS synthesis involves the formation of a high-energy phosphoric-sulfuric acid anhydride bond driven by GTP hydrolysis by CysN coupled to ATP hydrolysis by CysD. In Agrobacterium fabrum (strain C58 / ATCC 33970) (Agrobacterium tumefaciens (strain C58)), this protein is Sulfate adenylyltransferase subunit 1.